The sequence spans 701 residues: Glycine--tRNA ligase beta subunit (701 aa).

Belongs to the class-II aminoacyl-tRNA synthetase family. Tetramer of two alpha and two beta subunits.

Its subcellular location is the cytoplasm. It carries out the reaction tRNA(Gly) + glycine + ATP = glycyl-tRNA(Gly) + AMP + diphosphate. The sequence is that of Glycine--tRNA ligase beta subunit from Bradyrhizobium sp. (strain BTAi1 / ATCC BAA-1182).